Here is a 118-residue protein sequence, read N- to C-terminus: Ferredoxin-thioredoxin reductase, catalytic chain (118 aa).

C57 provides a ligand contact to [4Fe-4S] cluster. C59 serves as the catalytic Nucleophile. An intrachain disulfide couples C59 to C89. 3 residues coordinate [4Fe-4S] cluster: C76, C78, and C87.

Belongs to the ferredoxin thioredoxin reductase beta subunit family. In terms of assembly, heterodimer of subunit A (variable subunit) and subunit B (catalytic subunit). Heterodimeric FTR forms a complex with ferredoxin and thioredoxin. It depends on [4Fe-4S] cluster as a cofactor.

The protein localises to the plastid. The protein resides in the chloroplast. It catalyses the reaction [thioredoxin]-disulfide + 2 reduced [2Fe-2S]-[ferredoxin] + 2 H(+) = [thioredoxin]-dithiol + 2 oxidized [2Fe-2S]-[ferredoxin]. Its function is as follows. Catalytic subunit of the ferredoxin-thioredoxin reductase (FTR), which catalyzes the two-electron reduction of thioredoxins by the electrons provided by reduced ferredoxin. The chain is Ferredoxin-thioredoxin reductase, catalytic chain (ftrB) from Porphyra purpurea (Red seaweed).